The following is a 247-amino-acid chain: Protein NipSnap homolog 3B (247 aa).

4 positions are modified to N6-succinyllysine: Lys45, Lys48, Lys57, and Lys166.

This sequence belongs to the NipSnap family.

It is found in the cytoplasm. The protein localises to the cytosol. This chain is Protein NipSnap homolog 3B (Nipsnap3b), found in Mus musculus (Mouse).